The sequence spans 237 residues: Uridylate kinase (237 aa).

Lysine 12–glycine 15 is a binding site for ATP. The segment at glycine 20–glycine 25 is involved in allosteric activation by GTP. Glycine 54 is a binding site for UMP. ATP is bound by residues glycine 55 and arginine 59. Residues aspartate 74 and threonine 135–threonine 142 contribute to the UMP site. ATP contacts are provided by threonine 162, tyrosine 168, and aspartate 171.

It belongs to the UMP kinase family. Homohexamer.

The protein resides in the cytoplasm. It carries out the reaction UMP + ATP = UDP + ADP. Its pathway is pyrimidine metabolism; CTP biosynthesis via de novo pathway; UDP from UMP (UMPK route): step 1/1. Its activity is regulated as follows. Allosterically activated by GTP. Inhibited by UTP. Functionally, catalyzes the reversible phosphorylation of UMP to UDP. This chain is Uridylate kinase, found in Haemophilus influenzae (strain PittGG).